Reading from the N-terminus, the 174-residue chain is Protein RESISTANCE TO POWDERY MILDEW 8.2 (174 aa).

The RPW8 domain maps to 1-153 (MIAEVAAGGA…IMPQPKFEIH (153 aa)). Residues 7 to 23 (AGGALGLALSVLHEAVK) form a helical membrane-spanning segment. A coiled-coil region spans residues 68 to 145 (VNKRLKLLLE…EISTKLDKIM (78 aa)).

Belongs to the plant RPW8 protein family.

The protein resides in the membrane. Functionally, disease resistance (R) protein that induces localized, salicylic acid-dependent defenses. Confers resistance to powdery mildew (e.g. Erysiphe cichoracearum UCSC1). The chain is Protein RESISTANCE TO POWDERY MILDEW 8.2 from Arabidopsis thaliana (Mouse-ear cress).